Consider the following 455-residue polypeptide: MARPVVAIIGRPNVGKSTLVNRLCRSREAIVHDEPGVTRDRTYQDGYWGDREFKVVDTGGLVFDDDSEFLPEIREQAALAMEEASVAVVIVDGQQGITAADESIAEFLRSRPCPTLLAVNKCESPEQGLAMAAEFWSLGLGEPHPISAIHGVGTGDLLDQVLTFLPPKDQEGDEEEPIQMAIIGRPNVGKSSLLNAICGEQRAIVSPIRGTTRDTIDTNIVRENRPWRLVDTAGIRRRRSVNYGPEYFGINRSFKAIDRSDVCVLVIDALDGVTEQDQRLAGRIEEDGRACVVVVNKWDAVEKDSHTMTAMEKELRAKLYFLDWAPMLFTSALTGQRVDSIFALAALAVEQHRRRVSTSVVNEVLKEALSWRSPPTTRGGRQGRLYYGTQVASRPPSFTLFVNDPKLFGDTYRRYVERQIREGLGFDGTPVKLYWRGKQQRDAERDMVRQQNRQS.

EngA-type G domains follow at residues 4 to 169 (PVVA…PPKD) and 178 to 353 (IQMA…EQHR). Residues 10-17 (GRPNVGKS), 57-61 (DTGGL), 120-123 (NKCE), 184-191 (GRPNVGKS), 231-235 (DTAGI), and 296-299 (NKWD) each bind GTP. The 86-residue stretch at 354 to 439 (RRVSTSVVNE…PVKLYWRGKQ (86 aa)) folds into the KH-like domain.

Belongs to the TRAFAC class TrmE-Era-EngA-EngB-Septin-like GTPase superfamily. EngA (Der) GTPase family. Associates with the 50S ribosomal subunit.

In terms of biological role, GTPase that plays an essential role in the late steps of ribosome biogenesis. The sequence is that of GTPase Der from Parasynechococcus marenigrum (strain WH8102).